A 174-amino-acid polypeptide reads, in one-letter code: uncharacterized protein (174 aa).

A disordered region spans residues 1–55 (MGCVVSKSDDIKNENESRQRNQASSSQQPSSSQTPSKQIGIAAKDSEEQPQEVSY). A lipid anchor (N-myristoyl glycine) is attached at Gly2. The segment covering 7–19 (KSDDIKNENESRQ) has biased composition (basic and acidic residues). Residues 20–38 (RNQASSSQQPSSSQTPSKQ) are compositionally biased toward low complexity.

This is an uncharacterized protein from Dictyostelium discoideum (Social amoeba).